Here is a 408-residue protein sequence, read N- to C-terminus: Echinulin prenyltransferase 2 (408 aa).

Dimethylallyl diphosphate is bound by residues R94, K181, Y183, R248, K250, Y252, Q334, Y336, Y400, and Y404.

This sequence belongs to the tryptophan dimethylallyltransferase family.

It catalyses the reaction preechinulin + dimethylallyl diphosphate = tardioxopiperazine B + diphosphate. The enzyme catalyses preechinulin + dimethylallyl diphosphate = tardioxopiperazine A + diphosphate. It carries out the reaction tardioxopiperazine A + dimethylallyl diphosphate = echinulin + diphosphate. The catalysed reaction is tardioxopiperazine A + dimethylallyl diphosphate = variecolorin L + diphosphate. It catalyses the reaction neoechinulin A + dimethylallyl diphosphate = variecolorin G + diphosphate. The enzyme catalyses neoechinulin A + dimethylallyl diphosphate = isoechinulin A + diphosphate. It carries out the reaction isoechinulin A + dimethylallyl diphosphate = dehydroechinulin + diphosphate. The catalysed reaction is neoechinulin B + dimethylallyl diphosphate = isoechinulin B + diphosphate. It functions in the pathway secondary metabolite biosynthesis. The protein operates within alkaloid biosynthesis. Functionally, prenyltransferase; part of the gene cluster that mediates the biosynthesis of echinulin family alkaloid. The pathway begins with the biosynthesis of the cyclic dipeptide cyclo-L-Trp-L-Ala (cyclo-TA) by the NRPS echPS via condensation of L-alanine and L-tryptophan. The prenyltransferase echPT1 then catalyzes the first prenylation step, a reverse prenylation reaction at C2, to yield preechinulin. Preechinulin is the substrate of the cytochrome P450 monooxygenase echP450 that catalyzes the formation of the double bond between C10 and C11 to produce neoechulin A. The unique prenyltransferase echPT2 functions as a competitive enzyme with echP450 for preechinulin metabolization and uses preechinulin for effective regiospecific prenylations. Preechinulin is prenylated by echPT2 at C5 or C7. C7-prenylation leads to accumulation of tardioxopiperazine B without further modification by echPT2. In contrast, the C5-prenylated tardioxopiperazine A can be prenylated again by echPT2, predominantly at C7 to form echinulin or less frequently at C4 to give variecolorin L. EchPT2 also accepts neoechilunin A to produce varlecolorin G (prenylation at C5) or isoechinulin A (prenylation at C7). EchPT2 further converts isoechinulin A into dehydroechinulin. Moreover, a yet unidentified enzyme can also convert neoechilunin A into neoechilunin B by introducing a double bond between positions C14 and C17 and thus provides a further substrate to echPT2 for C5 and C7 prenylation. The chain is Echinulin prenyltransferase 2 from Aspergillus ruber (Eurotium rubrum).